A 219-amino-acid chain; its full sequence is Chloramphenicol acetyltransferase (219 aa).

His-190 serves as the catalytic Proton acceptor.

It belongs to the chloramphenicol acetyltransferase family. As to quaternary structure, homotrimer.

It carries out the reaction chloramphenicol + acetyl-CoA = chloramphenicol 3-acetate + CoA. Its function is as follows. This enzyme is an effector of chloramphenicol resistance in bacteria. The chain is Chloramphenicol acetyltransferase (catQ) from Clostridium perfringens.